Here is a 152-residue protein sequence, read N- to C-terminus: Interleukin-2 (152 aa).

The signal sequence occupies residues 1–20 (MYRMQLLSCIALTLALVANG). An O-linked (GalNAc...) threonine glycan is attached at T23. The cysteines at positions 78 and 126 are disulfide-linked.

This sequence belongs to the IL-2 family.

Its subcellular location is the secreted. Cytokine produced by activated CD4-positive helper T-cells and to a lesser extend activated CD8-positive T-cells and natural killer (NK) cells that plays pivotal roles in the immune response and tolerance. Binds to a receptor complex composed of either the high-affinity trimeric IL-2R (IL2RA/CD25, IL2RB/CD122 and IL2RG/CD132) or the low-affinity dimeric IL-2R (IL2RB and IL2RG). Interaction with the receptor leads to oligomerization and conformation changes in the IL-2R subunits resulting in downstream signaling starting with phosphorylation of JAK1 and JAK3. In turn, JAK1 and JAK3 phosphorylate the receptor to form a docking site leading to the phosphorylation of several substrates including STAT5. This process leads to activation of several pathways including STAT, phosphoinositide-3-kinase/PI3K and mitogen-activated protein kinase/MAPK pathways. Functions as a T-cell growth factor and can increase NK-cell cytolytic activity as well. Promotes strong proliferation of activated B-cells and subsequently immunoglobulin production. Plays a pivotal role in regulating the adaptive immune system by controlling the survival and proliferation of regulatory T-cells, which are required for the maintenance of immune tolerance. Moreover, participates in the differentiation and homeostasis of effector T-cell subsets, including Th1, Th2, Th17 as well as memory CD8-positive T-cells. The protein is Interleukin-2 (IL2) of Orcinus orca (Killer whale).